The primary structure comprises 264 residues: 3-methyl-2-oxobutanoate hydroxymethyltransferase (264 aa).

Mg(2+) contacts are provided by D45 and D84. 3-methyl-2-oxobutanoate-binding positions include 45-46 (DS), D84, and K112. E114 serves as a coordination point for Mg(2+). The active-site Proton acceptor is the E181.

The protein belongs to the PanB family. In terms of assembly, homodecamer; pentamer of dimers. Requires Mg(2+) as cofactor.

The protein resides in the cytoplasm. It catalyses the reaction 3-methyl-2-oxobutanoate + (6R)-5,10-methylene-5,6,7,8-tetrahydrofolate + H2O = 2-dehydropantoate + (6S)-5,6,7,8-tetrahydrofolate. Its pathway is cofactor biosynthesis; (R)-pantothenate biosynthesis; (R)-pantoate from 3-methyl-2-oxobutanoate: step 1/2. Its function is as follows. Catalyzes the reversible reaction in which hydroxymethyl group from 5,10-methylenetetrahydrofolate is transferred onto alpha-ketoisovalerate to form ketopantoate. This Escherichia coli O7:K1 (strain IAI39 / ExPEC) protein is 3-methyl-2-oxobutanoate hydroxymethyltransferase.